Consider the following 717-residue polypeptide: MKFGKRHYRPQVDQMDCGVASLAMVFGYYGSYYFLAHLRELAKTTMDGTTALGLVKVAEEIGFETRAIKADMTLFDLPDLTFPFVAHVLKEGKLLHYYVVTGQDKDSIHIADPDPGVKLTKLPRERFEEEWTGVTLFMAPSPDYKPHKEQKNGLLSFIPILVKQRGLIANIVLATLLVTVINIVGSYYLQSIIDTYVPDQMRSTLGIISIGLVIVYILQQILSYAQEYLLLVLGQRLSIDVILSYIKHVFHLPMSFFATRRTGEIVSRFTDANSIIDALASTILSIFLDVSTVVIISLVLFSQNTNLFFMTLLALPIYTVIIFAFMKPFEKMNRDTMEANAVLSSSIIEDINGIETIKSLTSESQRYQKIDKEFVDYLKKSFTYSRAESQQKALKKVAHLLLNVGILWMGAVLVMDGKMSLGQLITYNTLLVYFTNPLENIINLQTKLQTAQVANNRLNEVYLVASEFEEKKTVEDLSLMKGDMTFKQVHYKYGYGRDVLSDINLTVPQGSKVAFVGISGSGKTTLAKMMVNFYDPSQGEISLGGVNLNQIDKKALRQYINYLPQQPYVFNGTILENLLLGAKEGTTQEDILRAVELAEIREDIERMPLNYQTELTSDGAGISGGQRQRIALARALLTDAPVLILDEATSSLDILTEKRIVDNLIALDKTLIFIAHRLTIAERTEKVVVLDQGKIVEEGKHADLLAQGGFYAHLVNS.

The 128-residue stretch at Gln11–Met138 folds into the Peptidase C39 domain. Cys17 is a catalytic residue. 7 helical membrane-spanning segments follow: residues Gly18–Leu38, Gly166–Ser186, Leu205–Ala225, Leu237–Phe257, Ser281–Phe301, Asn306–Met326, and Val397–Gly417. Residues Ile168 to Thr450 form the ABC transmembrane type-1 domain. The 234-residue stretch at Met484 to Ser717 folds into the ABC transporter domain. Position 517–524 (Gly517–Thr524) interacts with ATP.

It belongs to the ABC transporter superfamily. HlyB family.

It localises to the cell membrane. In terms of biological role, required for induction of competence. Seems to transport the competence-stimulating peptide (CSP). The protein is Transport/processing ATP-binding protein ComA (comA) of Streptococcus pneumoniae (strain ATCC BAA-255 / R6).